Consider the following 314-residue polypeptide: Endolytic peptidoglycan transglycosylase RlpA (314 aa).

An N-terminal signal peptide occupies residues M1–A19. C20 carries N-palmitoyl cysteine lipidation. The S-diacylglycerol cysteine moiety is linked to residue C20. Residues S241–E314 form the SPOR domain.

It belongs to the RlpA family.

It localises to the cell membrane. In terms of biological role, lytic transglycosylase with a strong preference for naked glycan strands that lack stem peptides. This Helicobacter pylori (strain J99 / ATCC 700824) (Campylobacter pylori J99) protein is Endolytic peptidoglycan transglycosylase RlpA.